The sequence spans 474 residues: Trehalose-6-phosphate synthase (474 aa).

Arg-10 is a binding site for D-glucose 6-phosphate. Residue 22-23 (GG) coordinates UDP-alpha-D-glucose. The D-glucose 6-phosphate site is built by Tyr-77 and Asp-131. UDP-alpha-D-glucose-binding residues include Arg-263 and Lys-268. Arg-301 contacts D-glucose 6-phosphate. Residues Phe-340 and 366 to 370 (LVAKE) contribute to the UDP-alpha-D-glucose site.

The protein belongs to the glycosyltransferase 20 family. In terms of assembly, homotetramer.

The enzyme catalyses D-glucose 6-phosphate + UDP-alpha-D-glucose = alpha,alpha-trehalose 6-phosphate + UDP + H(+). It functions in the pathway glycan biosynthesis; trehalose biosynthesis. Probably involved in the osmoprotection via the biosynthesis of trehalose. Catalyzes the transfer of glucose from UDP-alpha-D-glucose (UDP-Glc) to D-glucose 6-phosphate (Glc-6-P) to form trehalose-6-phosphate. Acts with retention of the anomeric configuration of the UDP-sugar donor. This Klebsiella pneumoniae subsp. pneumoniae (strain ATCC 700721 / MGH 78578) protein is Trehalose-6-phosphate synthase.